The primary structure comprises 117 residues: Large ribosomal subunit protein bL20 (117 aa).

The protein belongs to the bacterial ribosomal protein bL20 family.

Its function is as follows. Binds directly to 23S ribosomal RNA and is necessary for the in vitro assembly process of the 50S ribosomal subunit. It is not involved in the protein synthesizing functions of that subunit. This chain is Large ribosomal subunit protein bL20, found in Photobacterium profundum (strain SS9).